A 447-amino-acid polypeptide reads, in one-letter code: Tubulin beta-4 chain (447 aa).

GTP-binding residues include glutamine 11, glutamate 71, serine 140, glycine 144, threonine 145, glycine 146, asparagine 206, and asparagine 228. Position 71 (glutamate 71) interacts with Mg(2+). Positions 428 to 447 are disordered; sequence QDATAEEYEEEEHDGEEEHA. Acidic residues predominate over residues 431-447; sequence TAEEYEEEEHDGEEEHA.

The protein belongs to the tubulin family. Dimer of alpha and beta chains. A typical microtubule is a hollow water-filled tube with an outer diameter of 25 nm and an inner diameter of 15 nM. Alpha-beta heterodimers associate head-to-tail to form protofilaments running lengthwise along the microtubule wall with the beta-tubulin subunit facing the microtubule plus end conferring a structural polarity. Microtubules usually have 13 protofilaments but different protofilament numbers can be found in some organisms and specialized cells. It depends on Mg(2+) as a cofactor.

Its subcellular location is the cytoplasm. The protein localises to the cytoskeleton. Tubulin is the major constituent of microtubules, a cylinder consisting of laterally associated linear protofilaments composed of alpha- and beta-tubulin heterodimers. Microtubules grow by the addition of GTP-tubulin dimers to the microtubule end, where a stabilizing cap forms. Below the cap, tubulin dimers are in GDP-bound state, owing to GTPase activity of alpha-tubulin. This Zea mays (Maize) protein is Tubulin beta-4 chain (TUBB4).